The chain runs to 340 residues: Deubiquitinase SseL (340 aa).

H223 is a catalytic residue. The active-site Nucleophile is the C285.

Belongs to the peptidase C79 family.

It is found in the secreted. The protein resides in the host cytoplasm. Functionally, effector proteins function to alter host cell physiology and promote bacterial survival in host tissues. This protease targets the host cell ubiquitin pathway by acting as a deubiquitinase in infected host cells. Specifically hydrolyzes mono- and polyubiquitin substrates in vitro with a preference for 'Lys-63'-linked ubiquitin chains, suggesting that it interferes with a signaling pathway rather than inhibiting proteasomal-dependent degradation of its targets. Does not possess desumoylating activity. Is required for the Salmonella-induced delayed cytotoxicity in macrophages and full virulence. Is not required for intracellular bacterial replication. The protein is Deubiquitinase SseL (sseL) of Salmonella typhimurium (strain LT2 / SGSC1412 / ATCC 700720).